A 191-amino-acid chain; its full sequence is Probable rho GDP-dissociation inhibitor (191 aa).

The segment at 1-22 is disordered; that stretch reads MSDHENTGENTSEYQYKQPPQK. Residues 8–21 show a composition bias toward polar residues; sequence GENTSEYQYKQPPQ.

It belongs to the Rho GDI family.

The protein localises to the cytoplasm. Regulates the GDP/GTP exchange reaction of the Rho proteins by inhibiting the dissociation of GDP from them, and the subsequent binding of GTP to them. This Caenorhabditis elegans protein is Probable rho GDP-dissociation inhibitor (rhi-1).